Here is a 546-residue protein sequence, read N- to C-terminus: MAKEIKFSDSARNLLFEGVRQLHDAVKVTMGPKGRNVLIQKSYGAPSITKDGVSVAKEIELSCPVANMGAQLVKEVASKTADAAGDGTTTATVLAYSIFKEGLRNITAGANPIEVKRGMDKAAEAIINELKKSSKKVGGKEEITQVATISANSDHNIGKLIADAMEKVGKDGVITVEEAKGIEDELDVVEGMQFDRGYLSPYFVTNAEKMTAQLDNAYILLTDKKISSMKDILPLLEKTMKEGKPLLIIAEDIEGEALTTLVVNKLRGVLNIAAVKAPGFGDRRKEMLKDIAVLTGGQVISEELGLTLENAEVEFLGKAGRIVIDKDNTTIVDGKGHSHDVKDRVAQIKTQIASTTSDYDKEKLQERLAKLSGGVAVIKVGAASEVEMKEKKDRVDDALSATKAAVEEGIVIGGGAALIRAAQKVHLHLNGDEKVGYEIIMRAIKAPLAQIAINAGYDGGVVVNEVQKHEGHFGFNASNGEYVDMFKEGIIDPLKVERIALQNAVSVSSLLLTTEATVHEIKEEKATPAMPDMGGMGGMGGMGGMM.

ATP is bound by residues 29–32 (TMGP), Lys50, 86–90 (DGTTT), Gly414, and Asp492.

It belongs to the chaperonin (HSP60) family. As to quaternary structure, forms a cylinder of 14 subunits composed of two heptameric rings stacked back-to-back. Interacts with the co-chaperonin GroES.

The protein localises to the cytoplasm. It carries out the reaction ATP + H2O + a folded polypeptide = ADP + phosphate + an unfolded polypeptide.. In terms of biological role, together with its co-chaperonin GroES, plays an essential role in assisting protein folding. The GroEL-GroES system forms a nano-cage that allows encapsulation of the non-native substrate proteins and provides a physical environment optimized to promote and accelerate protein folding. The chain is Chaperonin GroEL from Helicobacter acinonychis (strain Sheeba).